Reading from the N-terminus, the 625-residue chain is 1,4-alpha-glucan branching enzyme GlgB (625 aa).

Asp-302 serves as the catalytic Nucleophile. The active-site Proton donor is Glu-355.

This sequence belongs to the glycosyl hydrolase 13 family. GlgB subfamily. Monomer.

It carries out the reaction Transfers a segment of a (1-&gt;4)-alpha-D-glucan chain to a primary hydroxy group in a similar glucan chain.. It functions in the pathway glycan biosynthesis; glycogen biosynthesis. Catalyzes the formation of the alpha-1,6-glucosidic linkages in glycogen by scission of a 1,4-alpha-linked oligosaccharide from growing alpha-1,4-glucan chains and the subsequent attachment of the oligosaccharide to the alpha-1,6 position. In Albidiferax ferrireducens (strain ATCC BAA-621 / DSM 15236 / T118) (Rhodoferax ferrireducens), this protein is 1,4-alpha-glucan branching enzyme GlgB.